The sequence spans 234 residues: ATP-dependent dethiobiotin synthetase BioD (234 aa).

14-19 (GVGKTI) is a binding site for ATP. Threonine 18 serves as a coordination point for Mg(2+). Lysine 39 is a catalytic residue. Serine 43 is a binding site for substrate. ATP contacts are provided by residues aspartate 56, 118-121 (EGAG), 178-179 (NH), and 208-210 (PWL). Residues aspartate 56 and glutamate 118 each contribute to the Mg(2+) site.

This sequence belongs to the dethiobiotin synthetase family. As to quaternary structure, homodimer. Mg(2+) serves as cofactor.

It is found in the cytoplasm. The catalysed reaction is (7R,8S)-7,8-diammoniononanoate + CO2 + ATP = (4R,5S)-dethiobiotin + ADP + phosphate + 3 H(+). The protein operates within cofactor biosynthesis; biotin biosynthesis; biotin from 7,8-diaminononanoate: step 1/2. Catalyzes a mechanistically unusual reaction, the ATP-dependent insertion of CO2 between the N7 and N8 nitrogen atoms of 7,8-diaminopelargonic acid (DAPA, also called 7,8-diammoniononanoate) to form a ureido ring. The polypeptide is ATP-dependent dethiobiotin synthetase BioD (Marinobacter nauticus (strain ATCC 700491 / DSM 11845 / VT8) (Marinobacter aquaeolei)).